A 460-amino-acid chain; its full sequence is Acetyl-CoA decarbonylase/synthase complex subunit beta (460 aa).

4 residues coordinate [Ni-Fe-S] cluster: C188, C191, C277, and C279. Acidic residues predominate over residues 402 to 416 (EETEPEEEEVEEAYP). Residues 402–422 (EETEPEEEEVEEAYPEETPIP) are disordered.

The protein belongs to the CdhC family. Monomer. The ACDS complex is made up of alpha, epsilon, beta, gamma and delta chains with a probable stoichiometry of (alpha(2)epsilon(2))(4)-beta(8)-(gamma(1)delta(1))(8). The cofactor is [Ni-Fe-S] cluster.

It catalyses the reaction Co(I)-[corrinoid Fe-S protein] + acetyl-CoA + H(+) = methyl-Co(III)-[corrinoid Fe-S protein] + CO + CoA. Part of a complex that catalyzes the reversible cleavage of acetyl-CoA, allowing autotrophic growth from CO(2). The alpha-epsilon complex generates CO from CO(2), while the beta subunit (this protein) combines the CO with CoA and a methyl group to form acetyl-CoA. The methyl group, which is incorporated into acetyl-CoA, is transferred to the beta subunit by a corrinoid iron-sulfur protein (the gamma-delta complex). The chain is Acetyl-CoA decarbonylase/synthase complex subunit beta from Methanothermobacter thermautotrophicus (strain ATCC 29096 / DSM 1053 / JCM 10044 / NBRC 100330 / Delta H) (Methanobacterium thermoautotrophicum).